The chain runs to 358 residues: Type II restriction enzyme CviJI (358 aa).

Mg(2+) serves as cofactor.

The catalysed reaction is Endonucleolytic cleavage of DNA to give specific double-stranded fragments with terminal 5'-phosphates.. In terms of biological role, a P subtype restriction enzyme that recognizes the double-stranded sequence 5'-RGCY-3' and cleaves after G-2. In the presence of ATP, there is a relaxation of its specificity and it can cleave 5'-RGCN-3' and 5'-YGCY-3', but not 5'-YGCR-3' (R.CviJI* activity). This is Type II restriction enzyme CviJI from Paramecium bursaria Chlorella virus IL3A (PBCV-IL3A).